We begin with the raw amino-acid sequence, 340 residues long: MNTMIKAGIIGASGYTGGELLRLLVSHPDVSLELATSRSLAGKPVASTHRHLEGFLDLKYENPGLEEIRERCDLVFLAVPHGTGMNYVPELLDGSTKVIDLSADYRLDIPVFEKIYGIKHSDPRNAVYGLVELHPEAAREYFVANPGCFPTGAILSAAPLAAAGLIDIAVFDSKTGISGAGISPTETSHYPNLAENIVPYKLTAHRHRAEIVQELTRLDGNLRNISFTPHVIPTIRGISTTAHLFTKEPLSTEDVRGIYEEFYRDKPFVRLPGGVPSLTAVRGSNFCDIGFEADKENNRVVVLSAIDNLVKGASGQAIQNMNLMFGLVETRGLWTPATAP.

The active site involves Cys-148.

The protein belongs to the NAGSA dehydrogenase family. Type 1 subfamily.

It localises to the cytoplasm. It catalyses the reaction N-acetyl-L-glutamate 5-semialdehyde + phosphate + NADP(+) = N-acetyl-L-glutamyl 5-phosphate + NADPH + H(+). Its pathway is amino-acid biosynthesis; L-arginine biosynthesis; N(2)-acetyl-L-ornithine from L-glutamate: step 3/4. Catalyzes the NADPH-dependent reduction of N-acetyl-5-glutamyl phosphate to yield N-acetyl-L-glutamate 5-semialdehyde. The sequence is that of N-acetyl-gamma-glutamyl-phosphate reductase from Methanosarcina mazei (strain ATCC BAA-159 / DSM 3647 / Goe1 / Go1 / JCM 11833 / OCM 88) (Methanosarcina frisia).